The following is a 371-amino-acid chain: MEESMKQASVMENLRSVVFKESESLEGTCAKIRGYDFNNGIDYSQILKSMVSTGFQASNLGDAIETVNQMLDWRLSHEQVTEDCSQEEKNPTYRESIKCKIFLGFTSNLISSGVRDIIRYLVQHHMVDVIVTTTGGIEEDLIKCLADTFKGEFSLPGAELRSKGLNRIGNLLVPNDNYCKFEDWIIPIFDQMLEEQKAKNVLWTPSKLIMRLGKEINNESSYLYWAYKNDIPVFCPGLTDGSLGDMLYFHTFRNPGLIVDVVQDIRAINSEAVHANPRKTGMIILGGGLPKHHICNANMMRNGADYAVFINTAQEFDGSDSGARPDEAVSWGKIRGSAKSVKVHCDATIAFPLLVAETFAAKREQSAEPSS.

NAD(+) contacts are provided by residues 107–111, 133–135, glutamate 139, and aspartate 240; these read SNLIS and TTG. 138-139 is a spermidine binding site; sequence EE. Aspartate 245 provides a ligand contact to spermidine. Glycine 287 serves as a coordination point for NAD(+). Residue histidine 292 participates in spermidine binding. 312–313 lines the NAD(+) pocket; sequence TA. Spermidine contacts are provided by residues 318 to 320 and 327 to 333; these read GSD and EAVSWGK. Lysine 333 functions as the Nucleophile in the catalytic mechanism. An NAD(+)-binding site is contributed by 346–347; it reads DA.

Belongs to the deoxyhypusine synthase family. It depends on NAD(+) as a cofactor. In terms of tissue distribution, expressed in shoot tips.

The catalysed reaction is [eIF5A protein]-L-lysine + spermidine = [eIF5A protein]-deoxyhypusine + propane-1,3-diamine. Its pathway is protein modification; eIF5A hypusination. Catalyzes the NAD-dependent oxidative cleavage of spermidine and the subsequent transfer of the butylamine moiety of spermidine to the epsilon-amino group of a specific lysine residue of the eIF-5A precursor protein to form the intermediate deoxyhypusine residue. Also able to produce homospermidine from putrescine. The sequence is that of Deoxyhypusine synthase (DHS1) from Senecio vernalis (Spring groundsel).